Consider the following 230-residue polypeptide: Urease accessory protein UreF (230 aa).

It belongs to the UreF family. In terms of assembly, ureD, UreF and UreG form a complex that acts as a GTP-hydrolysis-dependent molecular chaperone, activating the urease apoprotein by helping to assemble the nickel containing metallocenter of UreC. The UreE protein probably delivers the nickel.

The protein localises to the cytoplasm. Required for maturation of urease via the functional incorporation of the urease nickel metallocenter. The sequence is that of Urease accessory protein UreF from Chromohalobacter salexigens (strain ATCC BAA-138 / DSM 3043 / CIP 106854 / NCIMB 13768 / 1H11).